The chain runs to 624 residues: MTIQILPPQLANQIAAGEVVERPASVIKELVENSLDAGATRVDIEIEKGGSKLIKIHDNGSGISKEDLGLALSRHATSKLSSLDDLDAILSFGFRGEALASISSVSRLTLTSRTADQVEAWQAYAEGSDMAVKVIPAAHPVGSTVEAVDLFFNTPARRRFLKSDKTEFTHIDEWLKRIALVRSDIHFTLKHNGKVVRNYRATNTQDQYLQRLAQISGKKFAEQAIEINCQHDDLKLTGYVQSPFFETPASDTQYFYVNGRLVRDRLVNHAVRQAFAEHETGEQASYVLMLELDPHQVDVNVHPAKHEVRFHQSRYVHDYIFQALQSALHQVGRLAIDSDNKLDTDSHSQSHERGHSAYGVAEPSHSRHDYSHQTAPSTKASTETNRERFSSPISAVPSHTSDVQSRGGATSSYRQQAELPSAAAIASYAELLKTPDVDQGNRGNKELQANVSMPPILAGQYWVLTQEEQLLLLPVRIISTWLLQHEISNKLDSGLVSQPLLMPVSISMDETWSDTLAERELLLRKIGIEVTIRLGQLIIKKVPPYLRQSQLVAVIPDLLQWLRFEEPSNEALASWLAKHDDKRFESAPDTWLAFSQLDDNVQDELIKKAKVLPWQSWLEEYPSD.

Positions 340-355 are enriched in basic and acidic residues; that stretch reads NKLDTDSHSQSHERGH. Residues 340–415 form a disordered region; the sequence is NKLDTDSHSQ…RGGATSSYRQ (76 aa). Composition is skewed to polar residues over residues 372 to 383 and 391 to 415; these read HQTAPSTKASTE and SPIS…SYRQ.

The protein belongs to the DNA mismatch repair MutL/HexB family.

Its function is as follows. This protein is involved in the repair of mismatches in DNA. It is required for dam-dependent methyl-directed DNA mismatch repair. May act as a 'molecular matchmaker', a protein that promotes the formation of a stable complex between two or more DNA-binding proteins in an ATP-dependent manner without itself being part of a final effector complex. This chain is DNA mismatch repair protein MutL, found in Shewanella sediminis (strain HAW-EB3).